Here is a 415-residue protein sequence, read N- to C-terminus: Serine hydroxymethyltransferase (415 aa).

Residues leucine 118 and 122-124 (GHL) contribute to the (6S)-5,6,7,8-tetrahydrofolate site. Lysine 227 carries the N6-(pyridoxal phosphate)lysine modification.

This sequence belongs to the SHMT family. In terms of assembly, homodimer. Pyridoxal 5'-phosphate is required as a cofactor.

It localises to the cytoplasm. It carries out the reaction (6R)-5,10-methylene-5,6,7,8-tetrahydrofolate + glycine + H2O = (6S)-5,6,7,8-tetrahydrofolate + L-serine. Its pathway is one-carbon metabolism; tetrahydrofolate interconversion. The protein operates within amino-acid biosynthesis; glycine biosynthesis; glycine from L-serine: step 1/1. Functionally, catalyzes the reversible interconversion of serine and glycine with tetrahydrofolate (THF) serving as the one-carbon carrier. This reaction serves as the major source of one-carbon groups required for the biosynthesis of purines, thymidylate, methionine, and other important biomolecules. Also exhibits THF-independent aldolase activity toward beta-hydroxyamino acids, producing glycine and aldehydes, via a retro-aldol mechanism. This chain is Serine hydroxymethyltransferase, found in Elusimicrobium minutum (strain Pei191).